The primary structure comprises 181 residues: 6,7-dimethyl-8-ribityllumazine synthase (181 aa).

5-amino-6-(D-ribitylamino)uracil contacts are provided by residues tyrosine 27, 58–60 (ALE), and 87–89 (CVI). 92-93 (ET) lines the (2S)-2-hydroxy-3-oxobutyl phosphate pocket. The active-site Proton donor is the histidine 95. Asparagine 120 is a binding site for 5-amino-6-(D-ribitylamino)uracil. Arginine 134 contributes to the (2S)-2-hydroxy-3-oxobutyl phosphate binding site.

It belongs to the DMRL synthase family.

It carries out the reaction (2S)-2-hydroxy-3-oxobutyl phosphate + 5-amino-6-(D-ribitylamino)uracil = 6,7-dimethyl-8-(1-D-ribityl)lumazine + phosphate + 2 H2O + H(+). Its pathway is cofactor biosynthesis; riboflavin biosynthesis; riboflavin from 2-hydroxy-3-oxobutyl phosphate and 5-amino-6-(D-ribitylamino)uracil: step 1/2. Functionally, catalyzes the formation of 6,7-dimethyl-8-ribityllumazine by condensation of 5-amino-6-(D-ribitylamino)uracil with 3,4-dihydroxy-2-butanone 4-phosphate. This is the penultimate step in the biosynthesis of riboflavin. This is 6,7-dimethyl-8-ribityllumazine synthase from Methylobacterium nodulans (strain LMG 21967 / CNCM I-2342 / ORS 2060).